A 300-amino-acid polypeptide reads, in one-letter code: MKELIQRSRKSFTVVQSVEADVPDNVWIKCPSCRELIYHKQLAERMKVCRCGYHMRLKAREWLALLDEDSFVEHDAHLRPADPLGFVSPKETYADKLREAQRRTGLADVVVSGVGSIEGRRLAVAVCDFEFIGGSMGSVFGEKMARAAERAAALGIPLLTINTSGGARMQEGVIALMQLAKVNMALTRLAAARQPHIAVLVDPCYGGVTASYASVADIIIAEPGASIGFAGRRVIEQTIRQKLPADFQTAEFMLQHGMVDMVVPRSELHSTLAKLLRLYAAEGRATAHKSEPIVTALASL.

The CoA carboxyltransferase N-terminal domain occupies 26 to 294 (VWIKCPSCRE…ATAHKSEPIV (269 aa)). The Zn(2+) site is built by cysteine 30, cysteine 33, cysteine 49, and cysteine 51. The segment at 30–51 (CPSCRELIYHKQLAERMKVCRC) adopts a C4-type zinc-finger fold.

The protein belongs to the AccD/PCCB family. Acetyl-CoA carboxylase is a heterohexamer composed of biotin carboxyl carrier protein (AccB), biotin carboxylase (AccC) and two subunits each of ACCase subunit alpha (AccA) and ACCase subunit beta (AccD). Requires Zn(2+) as cofactor.

It localises to the cytoplasm. The catalysed reaction is N(6)-carboxybiotinyl-L-lysyl-[protein] + acetyl-CoA = N(6)-biotinyl-L-lysyl-[protein] + malonyl-CoA. Its pathway is lipid metabolism; malonyl-CoA biosynthesis; malonyl-CoA from acetyl-CoA: step 1/1. In terms of biological role, component of the acetyl coenzyme A carboxylase (ACC) complex. Biotin carboxylase (BC) catalyzes the carboxylation of biotin on its carrier protein (BCCP) and then the CO(2) group is transferred by the transcarboxylase to acetyl-CoA to form malonyl-CoA. The chain is Acetyl-coenzyme A carboxylase carboxyl transferase subunit beta 2 from Roseiflexus sp. (strain RS-1).